The chain runs to 134 residues: MSTEPDWMADVVFDADGLIPAIAQDAENGQILMVAWMNRESLAETAATGRAVYWSRSRKKLWRKGEESGHAQQVHELRLDCDGDVILLKVHQNGGIACHTGRASCFYRRLDGTSQRAAWVTVDPVLKDPELIYK.

Asp-80 is a Mg(2+) binding site. Residue Cys-81 participates in Zn(2+) binding. Residues Asp-82 and Asp-84 each contribute to the Mg(2+) site. Zn(2+)-binding residues include Cys-98 and Cys-105.

It belongs to the PRA-CH family. Homodimer. Requires Mg(2+) as cofactor. It depends on Zn(2+) as a cofactor.

It is found in the cytoplasm. It catalyses the reaction 1-(5-phospho-beta-D-ribosyl)-5'-AMP + H2O = 1-(5-phospho-beta-D-ribosyl)-5-[(5-phospho-beta-D-ribosylamino)methylideneamino]imidazole-4-carboxamide. Its pathway is amino-acid biosynthesis; L-histidine biosynthesis; L-histidine from 5-phospho-alpha-D-ribose 1-diphosphate: step 3/9. Its function is as follows. Catalyzes the hydrolysis of the adenine ring of phosphoribosyl-AMP. In Bordetella avium (strain 197N), this protein is Phosphoribosyl-AMP cyclohydrolase.